A 634-amino-acid chain; its full sequence is 1-deoxy-D-xylulose-5-phosphate synthase (634 aa).

Residues His74 and 115-117 (AHS) contribute to the thiamine diphosphate site. Asp146 contributes to the Mg(2+) binding site. Thiamine diphosphate contacts are provided by residues 147–148 (GA), Asn176, Tyr283, and Glu365. Asn176 is a Mg(2+) binding site.

The protein belongs to the transketolase family. DXPS subfamily. In terms of assembly, homodimer. Mg(2+) serves as cofactor. Requires thiamine diphosphate as cofactor.

It carries out the reaction D-glyceraldehyde 3-phosphate + pyruvate + H(+) = 1-deoxy-D-xylulose 5-phosphate + CO2. Its pathway is metabolic intermediate biosynthesis; 1-deoxy-D-xylulose 5-phosphate biosynthesis; 1-deoxy-D-xylulose 5-phosphate from D-glyceraldehyde 3-phosphate and pyruvate: step 1/1. In terms of biological role, catalyzes the acyloin condensation reaction between C atoms 2 and 3 of pyruvate and glyceraldehyde 3-phosphate to yield 1-deoxy-D-xylulose-5-phosphate (DXP). This is 1-deoxy-D-xylulose-5-phosphate synthase from Burkholderia lata (strain ATCC 17760 / DSM 23089 / LMG 22485 / NCIMB 9086 / R18194 / 383).